Reading from the N-terminus, the 472-residue chain is 3-isopropylmalate dehydratase large subunit (472 aa).

Positions 353, 414, and 417 each coordinate [4Fe-4S] cluster.

Belongs to the aconitase/IPM isomerase family. LeuC type 1 subfamily. In terms of assembly, heterodimer of LeuC and LeuD. It depends on [4Fe-4S] cluster as a cofactor.

The catalysed reaction is (2R,3S)-3-isopropylmalate = (2S)-2-isopropylmalate. The protein operates within amino-acid biosynthesis; L-leucine biosynthesis; L-leucine from 3-methyl-2-oxobutanoate: step 2/4. In terms of biological role, catalyzes the isomerization between 2-isopropylmalate and 3-isopropylmalate, via the formation of 2-isopropylmaleate. The protein is 3-isopropylmalate dehydratase large subunit of Psychrobacter arcticus (strain DSM 17307 / VKM B-2377 / 273-4).